The sequence spans 511 residues: MTYLLALDQGTSSSRSIVFDEHGRIVAQAQLELPQIYPRPGWVEHDPLEIWRSQLATARAALAKAGIAANAVRAVGIANQRETTVLWNRKTGQPVHHAIVWQDRRAEPACAQLREQGHAGAIQAKTGLLIDAYFSGSKLQWLLDHVPGAREAAERGELAFGTVDSWLIWKLTHGQRHLTDVSNAARTMLLNVHTNQWDDDLLALLRIPRALMPEVLPSSADFGDTAADLLGHGIRIGGVAGDQQSALFGQACFTAGMAKNTYGTGCFMLMHLGARFQTSDNGLLTTSAAQLAPKPGAGSGQAEPALAQRAYAMEGSVFIGGAVVQWLRDGLRAITSSAGIEALAHSVPDAGGVMMVPAFTGLGAPYWKPEARGSITGLTRGSTLAHIARAALESIAYQSAALLQAMGRDAVAAGGAPVSELRVDGGACINDLLMQFQADLLGIPVLRPAVIETTALGAAYLAGLSSDLYHSTDELAQLWRAERRFEPRLDRARAQELMAHWEHAVRQATAR.

Threonine 11 is a binding site for ADP. Residues threonine 11, serine 12, and serine 13 each contribute to the ATP site. A sn-glycerol 3-phosphate-binding site is contributed by threonine 11. Arginine 15 contacts ADP. Residues arginine 81, glutamate 82, tyrosine 133, and aspartate 242 each contribute to the sn-glycerol 3-phosphate site. 5 residues coordinate glycerol: arginine 81, glutamate 82, tyrosine 133, aspartate 242, and glutamine 243. ADP contacts are provided by threonine 264 and glycine 321. ATP contacts are provided by threonine 264, glycine 321, glutamine 325, and glycine 426. Residues glycine 426 and asparagine 430 each contribute to the ADP site.

The protein belongs to the FGGY kinase family.

The catalysed reaction is glycerol + ATP = sn-glycerol 3-phosphate + ADP + H(+). The protein operates within polyol metabolism; glycerol degradation via glycerol kinase pathway; sn-glycerol 3-phosphate from glycerol: step 1/1. With respect to regulation, inhibited by fructose 1,6-bisphosphate (FBP). Key enzyme in the regulation of glycerol uptake and metabolism. Catalyzes the phosphorylation of glycerol to yield sn-glycerol 3-phosphate. In Verminephrobacter eiseniae (strain EF01-2), this protein is Glycerol kinase.